Reading from the N-terminus, the 101-residue chain is Large ribosomal subunit protein uL24 (101 aa).

Belongs to the universal ribosomal protein uL24 family. Part of the 50S ribosomal subunit.

In terms of biological role, one of two assembly initiator proteins, it binds directly to the 5'-end of the 23S rRNA, where it nucleates assembly of the 50S subunit. Functionally, one of the proteins that surrounds the polypeptide exit tunnel on the outside of the subunit. The protein is Large ribosomal subunit protein uL24 of Borreliella afzelii (strain PKo) (Borrelia afzelii).